An 87-amino-acid polypeptide reads, in one-letter code: Kappa-5-bungarotoxin (87 aa).

The signal sequence occupies residues 1–21 (MKTLLLTLVVVTIVCLDLGYT). 5 cysteine pairs are disulfide-bonded: Cys24/Cys42, Cys35/Cys63, Cys48/Cys52, Cys67/Cys79, and Cys80/Cys85.

This sequence belongs to the three-finger toxin family. Long-chain subfamily. Kappa-neurotoxin sub-subfamily. As to quaternary structure, homo- and heterodimer; non-covalently linked. Expressed by the venom gland.

Its subcellular location is the secreted. In terms of biological role, postsynaptic neurotoxin that binds and inhibits neuronal nicotinic acetylcholine receptors (nAChR) with high affinity (IC(50)&lt;100 nM). Is a selective, and slowly reversible antagonist of alpha-3/CHRNA3-containing and some alpha-4/CHRNA4-containing AChRs. The protein is Kappa-5-bungarotoxin of Bungarus multicinctus (Many-banded krait).